The following is a 217-amino-acid chain: Ribosomal RNA small subunit methyltransferase G (217 aa).

S-adenosyl-L-methionine-binding positions include Gly-79, Leu-84, 130–131, and Arg-148; that span reads IE.

This sequence belongs to the methyltransferase superfamily. RNA methyltransferase RsmG family.

It is found in the cytoplasm. The enzyme catalyses guanosine(527) in 16S rRNA + S-adenosyl-L-methionine = N(7)-methylguanosine(527) in 16S rRNA + S-adenosyl-L-homocysteine. Its function is as follows. Specifically methylates the N7 position of guanine in position 527 of 16S rRNA. This Desulfotalea psychrophila (strain LSv54 / DSM 12343) protein is Ribosomal RNA small subunit methyltransferase G.